A 211-amino-acid polypeptide reads, in one-letter code: Large ribosomal subunit protein uL3 (211 aa).

Q150 is subject to N5-methylglutamine.

It belongs to the universal ribosomal protein uL3 family. In terms of assembly, part of the 50S ribosomal subunit. Forms a cluster with proteins L14 and L19. Post-translationally, methylated by PrmB.

One of the primary rRNA binding proteins, it binds directly near the 3'-end of the 23S rRNA, where it nucleates assembly of the 50S subunit. This chain is Large ribosomal subunit protein uL3, found in Pseudomonas putida (strain GB-1).